The sequence spans 481 residues: Cytochrome P450 monooxygenase dpfgJ (481 aa).

Residues 23 to 43 (LVFTQAAVIGSILFVFLLGLY) traverse the membrane as a helical segment. A glycan (N-linked (GlcNAc...) asparagine) is linked at N338. Position 427 (C427) interacts with heme.

It belongs to the cytochrome P450 family. Heme serves as cofactor.

Its subcellular location is the membrane. Its pathway is secondary metabolite biosynthesis; terpenoid biosynthesis. Its function is as follows. Cytochrome P450 monooxygenase; part of the gene cluster that mediates the biosynthesis of diterpenoid pyrones. The first step of the pathway is the synthesis of the alpha-pyrone moiety by the polyketide synthase dpfgA via condensation of one acetyl-CoA starter unit with 3 malonyl-CoA units and 2 methylations. The alpha-pyrone is then combined with geranylgeranyl pyrophosphate (GGPP) formed by the GGPP synthase dpfgD through the action of the prenyltransferase dpfgC to yield a linear alpha-pyrone diterpenoid. Subsequent steps in the diterpenoid pyrone biosynthetic pathway involve the decalin core formation, which is initiated by the epoxidation of the C10-C11 olefin by the FAD-dependent oxidoreductase dpfgE, and is followed by a cyclization cascade catalyzed by the terpene cyclase dpfgB. The short chain dehydrogenase/reductase dpfgG then oxidizes the 8S hydroxy group to a ketone and the short chain dehydrogenase/reductase dpfgH reduces the ketone to the 8R hydroxy group to yield higginsianin B. Higginsianin B is further methylated by the methyltransferase dpfgI to produce the intermediate named FDDP B. The cytochrome P450 monooxygenase dfgpJ then catalyzes a three-step oxidation at C-27 to generate a carboxylic acid as well as C-26 hydroxylation. Finally, methyltransferase dpfgK methylates the carboxylic acid generated by dpfgJ, yielding the final diterpenoid pyrones from the pathway which were named FDDP D and FDDP E. The polypeptide is Cytochrome P450 monooxygenase dpfgJ (Gibberella zeae (strain ATCC MYA-4620 / CBS 123657 / FGSC 9075 / NRRL 31084 / PH-1) (Wheat head blight fungus)).